Here is a 101-residue protein sequence, read N- to C-terminus: MAKKSMIAREVKRAETAKKFAAKRAELKAIIASASSSEEQIWEAQTKLQQLPRDASPSRQRNRCRVTGRPHGVYRKFGLCRHKLREAAMRGDVPGLVKASW.

It belongs to the universal ribosomal protein uS14 family. As to quaternary structure, part of the 30S ribosomal subunit. Contacts proteins S3 and S10.

Binds 16S rRNA, required for the assembly of 30S particles and may also be responsible for determining the conformation of the 16S rRNA at the A site. The protein is Small ribosomal subunit protein uS14 of Cellvibrio japonicus (strain Ueda107) (Pseudomonas fluorescens subsp. cellulosa).